The following is a 240-amino-acid chain: Proteasome subunit beta type-1 (240 aa).

M1 is subject to N-acetylmethionine. A propeptide spanning residues 1–27 (MLSTAAYRDPDRELVMGPQGSAGPVQM) is cleaved from the precursor. Residue S57 is glycosylated (O-linked (GlcNAc) serine). S61 and S67 each carry phosphoserine. Y149 carries the post-translational modification Phosphotyrosine. Position 161 is a phosphoserine (S161). Position 203 is an N6-acetyllysine (K203). The O-linked (GlcNAc) serine glycan is linked to S208.

Belongs to the peptidase T1B family. As to quaternary structure, the 26S proteasome consists of a 20S proteasome core and two 19S regulatory subunits. The 20S proteasome core is a barrel-shaped complex made of 28 subunits that are arranged in four stacked rings. The two outer rings are each formed by seven alpha subunits, and the two inner rings are formed by seven beta subunits. The proteolytic activity is exerted by three beta-subunits PSMB5, PSMB6 and PSMB7. Interacts with SERPINB2. Interacts with RFPL4A. In terms of tissue distribution, ubiquitous.

It localises to the cytoplasm. Its subcellular location is the nucleus. In terms of biological role, non-catalytic component of the 20S core proteasome complex involved in the proteolytic degradation of most intracellular proteins. This complex plays numerous essential roles within the cell by associating with different regulatory particles. Associated with two 19S regulatory particles, forms the 26S proteasome and thus participates in the ATP-dependent degradation of ubiquitinated proteins. The 26S proteasome plays a key role in the maintenance of protein homeostasis by removing misfolded or damaged proteins that could impair cellular functions, and by removing proteins whose functions are no longer required. Associated with the PA200 or PA28, the 20S proteasome mediates ubiquitin-independent protein degradation. This type of proteolysis is required in several pathways including spermatogenesis (20S-PA200 complex) or generation of a subset of MHC class I-presented antigenic peptides (20S-PA28 complex). The sequence is that of Proteasome subunit beta type-1 (Psmb1) from Rattus norvegicus (Rat).